The primary structure comprises 136 residues: MSETPSKAKASKPAESKAQASDSSGANQYAIVEASGQQFWLQPNRYYDFDRLEGEVGDKVSLKEVLLVSGKAGASLGQPYVKDAVVNLKVLAHRRGPKVIVYKMQKKKKTRRKNGHRQELTRVMVESITVGGKPLS.

The span at 1-21 shows a compositional bias: low complexity; that stretch reads MSETPSKAKASKPAESKAQAS. The segment at 1–25 is disordered; it reads MSETPSKAKASKPAESKAQASDSSG.

Belongs to the bacterial ribosomal protein bL21 family. As to quaternary structure, part of the 50S ribosomal subunit. Contacts protein L20.

Its function is as follows. This protein binds to 23S rRNA in the presence of protein L20. In Synechococcus sp. (strain RCC307), this protein is Large ribosomal subunit protein bL21.